The primary structure comprises 213 residues: Uridine kinase (213 aa).

Residue 13–20 (GASASGKS) participates in ATP binding.

The protein belongs to the uridine kinase family.

The protein localises to the cytoplasm. It carries out the reaction uridine + ATP = UMP + ADP + H(+). It catalyses the reaction cytidine + ATP = CMP + ADP + H(+). Its pathway is pyrimidine metabolism; CTP biosynthesis via salvage pathway; CTP from cytidine: step 1/3. It participates in pyrimidine metabolism; UMP biosynthesis via salvage pathway; UMP from uridine: step 1/1. The sequence is that of Uridine kinase from Histophilus somni (strain 129Pt) (Haemophilus somnus).